We begin with the raw amino-acid sequence, 229 residues long: Large ribosomal subunit protein uL1 (229 aa).

As to quaternary structure, part of the 50S ribosomal subunit.

In terms of biological role, directly binds to 23S rRNA. Forms what is known as the L1 stalk, which protrudes beyond the 70S ribosome surface. The stalk is preferentially stabilized in 70S versus 50S crystals. Interacts with the E site tRNA, blocking the exit path. This blockage implies that this section of the ribosome must be able to move to release the deacetylated tRNA. Its function is as follows. Protein L1 is also a translational repressor protein, it controls the translation of the L11 operon by binding to its mRNA. The sequence is that of Large ribosomal subunit protein uL1 (rplA) from Thermus thermophilus (strain ATCC 27634 / DSM 579 / HB8).